We begin with the raw amino-acid sequence, 65 residues long: Alpha-toxin OD1 (65 aa).

The region spanning 3–65 (RDAYIADDKN…VPIRIPGKCR (63 aa)) is the LCN-type CS-alpha/beta domain. An Important for toxin selectivity for individual Nav channel subtype (Nav1.6/SCN8A and Nav1.7/SCN9A), but not for toxin potency motif is present at residues 9–11 (DDK). Disulfide bonds link cysteine 13–cysteine 64, cysteine 17–cysteine 37, cysteine 23–cysteine 47, and cysteine 27–cysteine 49. Arginine 65 is subject to Arginine amide.

This sequence belongs to the long (4 C-C) scorpion toxin superfamily. Sodium channel inhibitor family. Alpha subfamily. In terms of tissue distribution, expressed by the venom gland.

The protein resides in the secreted. Its function is as follows. Alpha toxins bind voltage-independently at site-3 of sodium channels and inhibit the inactivation of the activated channels. The toxin affect mammalian sodium channels Nav1.7/SCN9A (EC(50)=4.5 nM), Nav1.4/SCN4A (EC(50)=9.6 nM), Nav1.6/SCN8A (EC(50)=30 nM), Nav1.5/SCN5A (only at micromolar concentrations), and insect sodium channel para/tipE (EC(50)=80 nM). In vivo, intraplantar administration of this toxin elicits pain behaviors, including licking and flinching of the hind paw. The protein is Alpha-toxin OD1 of Odontobuthus doriae (Yellow Iranian scorpion).